The following is a 300-amino-acid chain: Ribonuclease HIII (300 aa).

Residues arginine 86–glutamine 300 form the RNase H type-2 domain. Residues aspartate 92, glutamate 93, and aspartate 196 each coordinate a divalent metal cation.

This sequence belongs to the RNase HII family. RnhC subfamily. Requires Mn(2+) as cofactor. Mg(2+) serves as cofactor.

It localises to the cytoplasm. It catalyses the reaction Endonucleolytic cleavage to 5'-phosphomonoester.. Functionally, endonuclease that specifically degrades the RNA of RNA-DNA hybrids. In Chlamydia trachomatis serovar L2 (strain ATCC VR-902B / DSM 19102 / 434/Bu), this protein is Ribonuclease HIII.